A 154-amino-acid chain; its full sequence is Flagellar assembly factor FliW (154 aa).

Belongs to the FliW family. Interacts with translational regulator CsrA and flagellin(s).

It localises to the cytoplasm. In terms of biological role, acts as an anti-CsrA protein, binds CsrA and prevents it from repressing translation of its target genes, one of which is flagellin. Binds to flagellin and participates in the assembly of the flagellum. The sequence is that of Flagellar assembly factor FliW from Carboxydothermus hydrogenoformans (strain ATCC BAA-161 / DSM 6008 / Z-2901).